We begin with the raw amino-acid sequence, 213 residues long: Small ribosomal subunit protein uS5 (213 aa).

Residues 1–42 are disordered; sequence MSERDRNGGRSADNNRNDRNERGGRNDRGGRNDRRNNQQDER. In terms of domain architecture, S5 DRBM spans 45 to 108; the sequence is YIERVVTINR…EEARKNFFRV (64 aa).

The protein belongs to the universal ribosomal protein uS5 family. In terms of assembly, part of the 30S ribosomal subunit. Contacts proteins S4 and S8.

With S4 and S12 plays an important role in translational accuracy. Functionally, located at the back of the 30S subunit body where it stabilizes the conformation of the head with respect to the body. This chain is Small ribosomal subunit protein uS5, found in Corynebacterium urealyticum (strain ATCC 43042 / DSM 7109).